Reading from the N-terminus, the 91-residue chain is Acylphosphatase (91 aa).

In terms of domain architecture, Acylphosphatase-like spans 5–91 (CSKFIVSGHV…EHDYQGFEIL (87 aa)). Catalysis depends on residues arginine 20 and asparagine 38.

It belongs to the acylphosphatase family.

The enzyme catalyses an acyl phosphate + H2O = a carboxylate + phosphate + H(+). This is Acylphosphatase (acyP) from Vibrio cholerae serotype O1 (strain ATCC 39315 / El Tor Inaba N16961).